The chain runs to 134 residues: Protein PsiB (134 aa).

In terms of biological role, could be involved directly or indirectly in exopolysaccharide synthesis. The polypeptide is Protein PsiB (psiB) (Rhizobium leguminosarum bv. phaseoli).